A 500-amino-acid chain; its full sequence is Beta-xylosidase (500 aa).

E160 functions as the Proton donor in the catalytic mechanism. Catalysis depends on E277, which acts as the Nucleophile.

It belongs to the glycosyl hydrolase 39 family.

The enzyme catalyses Hydrolysis of (1-&gt;4)-beta-D-xylans, to remove successive D-xylose residues from the non-reducing termini.. The polypeptide is Beta-xylosidase (xynB) (Thermoanaerobacterium saccharolyticum (strain DSM 8691 / JW/SL-YS485)).